Here is a 1102-residue protein sequence, read N- to C-terminus: Carbamoyl phosphate synthase large chain (1102 aa).

The segment at 1 to 402 (MPKRTDLKSV…ALQKALRSLE (402 aa)) is carboxyphosphate synthetic domain. The ATP site is built by R129, R169, G175, G176, E208, I210, E215, G241, V242, H243, Q285, and E299. An ATP-grasp 1 domain is found at 133-328 (KGVVERCGAE…IAKIATKLSL (196 aa)). Mg(2+) contacts are provided by Q285, E299, and N301. 3 residues coordinate Mn(2+): Q285, E299, and N301. An oligomerization domain region spans residues 403 to 546 (QKGSQLDFSS…YHYSSYDEED (144 aa)). The interval 547 to 950 (EVGLHAKPSV…AFAKSQAAAN (404 aa)) is carbamoyl phosphate synthetic domain. The ATP-grasp 2 domain maps to 677–868 (ARVLDEAGLT…MAKAAALIGT (192 aa)). R713, R752, L754, E759, G784, I785, H786, S787, Q827, and E839 together coordinate ATP. Mg(2+)-binding residues include Q827, E839, and N841. Q827, E839, and N841 together coordinate Mn(2+). One can recognise an MGS-like domain in the interval 951–1096 (NALPTEGKIF…QEHAANLSAA (146 aa)). The tract at residues 951–1102 (NALPTEGKIF…LSAAMEAANA (152 aa)) is allosteric domain.

This sequence belongs to the CarB family. As to quaternary structure, composed of two chains; the small (or glutamine) chain promotes the hydrolysis of glutamine to ammonia, which is used by the large (or ammonia) chain to synthesize carbamoyl phosphate. Tetramer of heterodimers (alpha,beta)4. It depends on Mg(2+) as a cofactor. The cofactor is Mn(2+).

The enzyme catalyses hydrogencarbonate + L-glutamine + 2 ATP + H2O = carbamoyl phosphate + L-glutamate + 2 ADP + phosphate + 2 H(+). The catalysed reaction is hydrogencarbonate + NH4(+) + 2 ATP = carbamoyl phosphate + 2 ADP + phosphate + 2 H(+). The protein operates within amino-acid biosynthesis; L-arginine biosynthesis; carbamoyl phosphate from bicarbonate: step 1/1. It participates in pyrimidine metabolism; UMP biosynthesis via de novo pathway; (S)-dihydroorotate from bicarbonate: step 1/3. Functionally, large subunit of the glutamine-dependent carbamoyl phosphate synthetase (CPSase). CPSase catalyzes the formation of carbamoyl phosphate from the ammonia moiety of glutamine, carbonate, and phosphate donated by ATP, constituting the first step of 2 biosynthetic pathways, one leading to arginine and/or urea and the other to pyrimidine nucleotides. The large subunit (synthetase) binds the substrates ammonia (free or transferred from glutamine from the small subunit), hydrogencarbonate and ATP and carries out an ATP-coupled ligase reaction, activating hydrogencarbonate by forming carboxy phosphate which reacts with ammonia to form carbamoyl phosphate. This Paenarthrobacter aurescens (strain TC1) protein is Carbamoyl phosphate synthase large chain.